The sequence spans 315 residues: tRNA dimethylallyltransferase (315 aa).

ATP is bound at residue Gly-15–Ser-22. Thr-17–Ser-22 contacts substrate. Interaction with substrate tRNA regions lie at residues Asp-40–Leu-43 and Gln-162–Arg-166.

This sequence belongs to the IPP transferase family. As to quaternary structure, monomer. It depends on Mg(2+) as a cofactor.

It carries out the reaction adenosine(37) in tRNA + dimethylallyl diphosphate = N(6)-dimethylallyladenosine(37) in tRNA + diphosphate. Functionally, catalyzes the transfer of a dimethylallyl group onto the adenine at position 37 in tRNAs that read codons beginning with uridine, leading to the formation of N6-(dimethylallyl)adenosine (i(6)A). This chain is tRNA dimethylallyltransferase, found in Buchnera aphidicola subsp. Acyrthosiphon pisum (strain APS) (Acyrthosiphon pisum symbiotic bacterium).